Reading from the N-terminus, the 237-residue chain is uncharacterized protein (237 aa).

A Response regulatory domain is found at 3–116 (RILLVEDDER…VVMAKIKSVL (114 aa)). Position 52 is a 4-aspartylphosphate (aspartate 52). Residues 131–229 (SRIVELGGLT…IRGQGYQFQV (99 aa)) constitute a DNA-binding region (ompR/PhoB-type).

Post-translationally, phosphorylated by YvcQ.

It is found in the cytoplasm. Functionally, member of the two-component regulatory system YvcQ/YvcP. This is an uncharacterized protein from Bacillus subtilis (strain 168).